The following is a 551-amino-acid chain: Eukaryotic translation initiation factor 3 subunit D-2 (551 aa).

Positions asparagine 105–arginine 152 are disordered. The span at alanine 119–alanine 128 shows a compositional bias: gly residues. An RNA gate region spans residues glutamine 290 to proline 304.

This sequence belongs to the eIF-3 subunit D family. Component of the eukaryotic translation initiation factor 3 (eIF-3) complex. The eIF-3 complex interacts with pix.

Its subcellular location is the cytoplasm. In terms of biological role, mRNA cap-binding component of the eukaryotic translation initiation factor 3 (eIF-3) complex, which is involved in protein synthesis of a specialized repertoire of mRNAs and, together with other initiation factors, stimulates binding of mRNA and methionyl-tRNAi to the 40S ribosome. The eIF-3 complex specifically targets and initiates translation of a subset of mRNAs involved in cell proliferation. In the eIF-3 complex, eif3d specifically recognizes and binds the 7-methylguanosine cap of a subset of mRNAs. In Drosophila erecta (Fruit fly), this protein is Eukaryotic translation initiation factor 3 subunit D-2.